The chain runs to 35 residues: Bacteriocin SRCAM 1580 (35 aa).

It belongs to the bacteriocin class IIA/YGNGV family.

The protein resides in the secreted. In terms of biological role, bacteriocin with antibacterial activity against C.jejuni. In Niallia circulans (Bacillus circulans), this protein is Bacteriocin SRCAM 1580.